The chain runs to 551 residues: FGGY carbohydrate kinase domain-containing protein (551 aa).

It belongs to the FGGY kinase family. Expressed in kidney, lung and small intestine and to a lower extent in liver and detected in cerebrospinal fluid (at protein level).

The enzyme catalyses D-ribulose + ATP = D-ribulose 5-phosphate + ADP + H(+). It participates in carbohydrate metabolism; pentose and glucuronate interconversion. In terms of biological role, catalyzes ATP-dependent phosphorylation of D-ribulose at C-5 to form D-ribulose 5-phosphate. Postulated to function in a metabolite repair mechanism by preventing toxic accumulation of free D-ribulose formed by non-specific phosphatase activities. Alternatively, may play a role in regulating D-ribulose 5-phosphate recycling in the pentose phosphate pathway. Can phosphorylate ribitol with low efficiency. In Homo sapiens (Human), this protein is FGGY carbohydrate kinase domain-containing protein.